We begin with the raw amino-acid sequence, 145 residues long: Eukaryotic translation initiation factor 1A (145 aa).

Positions 1-15 (MPKNKGKGGKNRKRG) are enriched in basic residues. The tract at residues 1-25 (MPKNKGKGGKNRKRGKNEADDDKRE) is disordered. Basic and acidic residues predominate over residues 16–25 (KNEADDDKRE). One can recognise an S1-like domain in the interval 22-96 (DKRELVFKED…DKADVILKLM (75 aa)).

The protein belongs to the eIF-1A family.

Its function is as follows. Seems to be required for maximal rate of protein biosynthesis. Enhances ribosome dissociation into subunits and stabilizes the binding of the initiator Met-tRNA(I) to 40 S ribosomal subunits. The protein is Eukaryotic translation initiation factor 1A of Onobrychis viciifolia (Common sainfoin).